A 259-amino-acid chain; its full sequence is Adenosylcobinamide-GDP ribazoletransferase (259 aa).

The next 6 membrane-spanning stretches (helical) occupy residues 9–29, 43–63, 64–84, 118–138, 143–163, and 196–216; these read NLFFIAMGFFTRIPMPKWIEV, LVGLLVGAISAAVYSLMLYWV, SPSVAIVFAMITSVLVTGGFH, ALALVLALLLKWQLLTELALF, VSLALIVGHCLSRVVAASFIF, and VLALLLVGLVPALVLITGLVI.

It belongs to the CobS family. Requires Mg(2+) as cofactor.

It is found in the cell inner membrane. The catalysed reaction is alpha-ribazole + adenosylcob(III)inamide-GDP = adenosylcob(III)alamin + GMP + H(+). It catalyses the reaction alpha-ribazole 5'-phosphate + adenosylcob(III)inamide-GDP = adenosylcob(III)alamin 5'-phosphate + GMP + H(+). The protein operates within cofactor biosynthesis; adenosylcobalamin biosynthesis; adenosylcobalamin from cob(II)yrinate a,c-diamide: step 7/7. Its function is as follows. Joins adenosylcobinamide-GDP and alpha-ribazole to generate adenosylcobalamin (Ado-cobalamin). Also synthesizes adenosylcobalamin 5'-phosphate from adenosylcobinamide-GDP and alpha-ribazole 5'-phosphate. The polypeptide is Adenosylcobinamide-GDP ribazoletransferase (Shewanella halifaxensis (strain HAW-EB4)).